A 472-amino-acid chain; its full sequence is 2-amino-4-ketopentanoate thiolase beta subunit (472 aa).

Lysine 102 carries the N6-(pyridoxal phosphate)lysine modification. Pyridoxal 5'-phosphate contacts are provided by residues asparagine 128 and 238-242 (AGGGN).

This sequence belongs to the threonine synthase family. As to quaternary structure, heterodimer with OrtA. The cofactor is pyridoxal 5'-phosphate.

It catalyses the reaction D-alanine + acetyl-CoA = (2R)-2-amino-4-oxopentanoate + CoA. Its function is as follows. Involved in the ornithine fermentation pathway. Catalyzes the thiolytic cleavage of 2-amino-4-ketopentanoate (AKP) with coenzyme A (CoA) to form acetyl-CoA and alanine. It is strictly specific for AKP. The sequence is that of 2-amino-4-ketopentanoate thiolase beta subunit from Unknown prokaryotic organism.